A 286-amino-acid polypeptide reads, in one-letter code: Pantothenate synthetase (286 aa).

30–37 contributes to the ATP binding site; that stretch reads MGNLHEGH. The active-site Proton donor is the His-37. Residue Gln-64 participates in (R)-pantoate binding. A beta-alanine-binding site is contributed by Gln-64. Residue 151 to 154 participates in ATP binding; it reads GKKD. Gln-157 is a binding site for (R)-pantoate. Residues Leu-180 and 188 to 191 each bind ATP; that span reads LSSR.

The protein belongs to the pantothenate synthetase family. In terms of assembly, homodimer.

It is found in the cytoplasm. It catalyses the reaction (R)-pantoate + beta-alanine + ATP = (R)-pantothenate + AMP + diphosphate + H(+). It functions in the pathway cofactor biosynthesis; (R)-pantothenate biosynthesis; (R)-pantothenate from (R)-pantoate and beta-alanine: step 1/1. Functionally, catalyzes the condensation of pantoate with beta-alanine in an ATP-dependent reaction via a pantoyl-adenylate intermediate. This Leptothrix cholodnii (strain ATCC 51168 / LMG 8142 / SP-6) (Leptothrix discophora (strain SP-6)) protein is Pantothenate synthetase.